Consider the following 1070-residue polypeptide: uncharacterized protein (1070 aa).

Residues 477–523 (LIDTNQLLLRQLQQIVKLGIFNEKKIKEELKANKFNEQVALQILESE) enclose the UBA domain.

This is an uncharacterized protein from Sulfolobus islandicus rod-shaped virus 1 (SIRV-1).